The chain runs to 217 residues: Casparian strip membrane protein 6 (217 aa).

At 1–57 (MEEAKHIEAVEAKQIEAEEAQRIKAGEAKQIEAGETSRSSRKVITFEPKLVINKGIS) the chain is on the cytoplasmic side. The helical transmembrane segment at 58–78 (VLGFVLRLFAVFGTIGSALAM) threads the bilayer. Over 79–103 (GTTHESVVSLSQLVLLKVKYSDLPT) the chain is Extracellular. The helical transmembrane segment at 104–124 (LMFFVVANAIAGGYLVLSLPV) threads the bilayer. Residues 125–138 (SIFHIFSTKAKTSR) are Cytoplasmic-facing. The helical transmembrane segment at 139-159 (IILLVIDTVMLALVSSGASAA) threads the bilayer. The Extracellular portion of the chain corresponds to 160-191 (TATVYLAHEGNTTANWPPICQQFDGFCERISG). An N-linked (GlcNAc...) asparagine glycan is attached at Asn170. A helical membrane pass occupies residues 192–212 (SLIGSFCAVILLMLIVINSAI). At 213-217 (SLSRH) the chain is on the cytoplasmic side.

It belongs to the Casparian strip membrane proteins (CASP) family. In terms of assembly, homodimer and heterodimers.

It localises to the cell membrane. Its function is as follows. Regulates membrane-cell wall junctions and localized cell wall deposition. Required for establishment of the Casparian strip membrane domain (CSD) and the subsequent formation of Casparian strips, a cell wall modification of the root endodermis that determines an apoplastic barrier between the intraorganismal apoplasm and the extraorganismal apoplasm and prevents lateral diffusion. In Arabidopsis lyrata subsp. lyrata (Lyre-leaved rock-cress), this protein is Casparian strip membrane protein 6.